The primary structure comprises 168 residues: Peptide deformylase 1 (168 aa).

The Fe cation site is built by Cys92 and His134. Glu135 is an active-site residue. Position 138 (His138) interacts with Fe cation.

Belongs to the polypeptide deformylase family. The cofactor is Fe(2+).

The enzyme catalyses N-terminal N-formyl-L-methionyl-[peptide] + H2O = N-terminal L-methionyl-[peptide] + formate. Its function is as follows. Removes the formyl group from the N-terminal Met of newly synthesized proteins. Requires at least a dipeptide for an efficient rate of reaction. N-terminal L-methionine is a prerequisite for activity but the enzyme has broad specificity at other positions. The protein is Peptide deformylase 1 of Pseudomonas syringae pv. tomato (strain ATCC BAA-871 / DC3000).